Here is a 47-residue protein sequence, read N- to C-terminus: Large ribosomal subunit protein bL27c (47 aa).

The disordered stretch occupies residues 1–21 (STKNGRDSNAQRLGVKKYGGE).

It belongs to the bacterial ribosomal protein bL27 family.

The protein localises to the plastid. The protein resides in the chloroplast. The polypeptide is Large ribosomal subunit protein bL27c (rpl27) (Porphyridium purpureum (Red alga)).